Here is a 230-residue protein sequence, read N- to C-terminus: ATP synthase subunit a (230 aa).

5 helical membrane passes run Leu17–Ala37, Ile78–Ile98, Asp107–Ile127, Leu165–Val187, and Glu198–Ile218.

It belongs to the ATPase A chain family. F-type ATPases have 2 components, CF(1) - the catalytic core - and CF(0) - the membrane proton channel. CF(1) has five subunits: alpha(3), beta(3), gamma(1), delta(1), epsilon(1). CF(0) has three main subunits: a(1), b(2) and c(9-12). The alpha and beta chains form an alternating ring which encloses part of the gamma chain. CF(1) is attached to CF(0) by a central stalk formed by the gamma and epsilon chains, while a peripheral stalk is formed by the delta and b chains.

It localises to the cell inner membrane. Functionally, key component of the proton channel; it plays a direct role in the translocation of protons across the membrane. In Legionella pneumophila (strain Paris), this protein is ATP synthase subunit a.